We begin with the raw amino-acid sequence, 61 residues long: Small ribosomal subunit protein uS14C (61 aa).

Zn(2+) contacts are provided by C24, C27, C40, and C43.

This sequence belongs to the universal ribosomal protein uS14 family. Zinc-binding uS14 subfamily. In terms of assembly, part of the 30S ribosomal subunit. Contacts proteins S3 and S10. The cofactor is Zn(2+).

Binds 16S rRNA, required for the assembly of 30S particles and may also be responsible for determining the conformation of the 16S rRNA at the A site. In Bacillus licheniformis (strain ATCC 14580 / DSM 13 / JCM 2505 / CCUG 7422 / NBRC 12200 / NCIMB 9375 / NCTC 10341 / NRRL NRS-1264 / Gibson 46), this protein is Small ribosomal subunit protein uS14C.